A 698-amino-acid polypeptide reads, in one-letter code: Na(+)/H(+) antiporter NhaS5 (698 aa).

12 helical membrane-spanning segments follow: residues Ser10–Phe30, Leu35–Val55, Leu65–Val85, Leu100–Phe120, Asn121–Val141, Ile156–Ile176, Ala184–Phe204, Gln222–Val242, Leu275–Val295, Leu300–Ile320, Gly333–Ala353, and Val370–Ala390.

Belongs to the monovalent cation:proton antiporter 2 (CPA2) transporter (TC 2.A.37) family.

It localises to the membrane. Na(+)/H(+) antiporter. In Synechocystis sp. (strain ATCC 27184 / PCC 6803 / Kazusa), this protein is Na(+)/H(+) antiporter NhaS5 (nhaS5).